Here is an 882-residue protein sequence, read N- to C-terminus: Lon protease homolog, mitochondrial (882 aa).

The transit peptide at 1 to 34 (MIHVLKSRSTLLTASSIVRTSVGSSSRYSQTRTY) directs the protein to the mitochondrion. A Lon N-terminal domain is found at 68–281 (TLGLPLVSRP…KALVLLNRER (214 aa)). 435–442 (GPPGTGKT) contacts ATP. The Lon proteolytic domain occupies 687–878 (PLPHGIVMGL…DKVYEVAFSS (192 aa)). Catalysis depends on residues serine 784 and lysine 827.

Belongs to the peptidase S16 family. Homohexamer or homoheptamer. Organized in a ring with a central cavity.

It localises to the mitochondrion matrix. It catalyses the reaction Hydrolysis of proteins in presence of ATP.. Its function is as follows. ATP-dependent serine protease that mediates the selective degradation of misfolded, unassembled or oxidatively damaged polypeptides as well as certain short-lived regulatory proteins in the mitochondrial matrix. May also have a chaperone function in the assembly of inner membrane protein complexes. Participates in the regulation of mitochondrial gene expression and in the maintenance of the integrity of the mitochondrial genome. Binds to mitochondrial DNA in a site-specific manner. This chain is Lon protease homolog, mitochondrial, found in Phaeodactylum tricornutum (strain CCAP 1055/1).